We begin with the raw amino-acid sequence, 37 residues long: Large ribosomal subunit protein bL36 (37 aa).

It belongs to the bacterial ribosomal protein bL36 family.

The sequence is that of Large ribosomal subunit protein bL36 from Ureaplasma urealyticum serovar 10 (strain ATCC 33699 / Western).